A 116-amino-acid polypeptide reads, in one-letter code: Large ribosomal subunit protein bL19 (116 aa).

The protein belongs to the bacterial ribosomal protein bL19 family.

In terms of biological role, this protein is located at the 30S-50S ribosomal subunit interface and may play a role in the structure and function of the aminoacyl-tRNA binding site. The chain is Large ribosomal subunit protein bL19 from Shewanella loihica (strain ATCC BAA-1088 / PV-4).